A 188-amino-acid polypeptide reads, in one-letter code: uncharacterized protein (188 aa).

Its subcellular location is the plastid. The protein localises to the cyanelle. This is an uncharacterized protein from Cyanophora paradoxa.